The sequence spans 306 residues: Protein YIPF1 (306 aa).

Over 1 to 119 the chain is Cytoplasmic; it reads MAAVDDLQFE…VRLYIRSNPD (119 aa). Residues 14 to 62 form a disordered region; the sequence is NAATSLTANPDATTVNIEDPGETPKHQPGSPRGSGREEDDELLGNDDSD. A compositionally biased stretch (polar residues) spans 15 to 29; it reads AATSLTANPDATTVN. Residues 50-59 are compositionally biased toward acidic residues; sequence EEDDELLGND. A helical transmembrane segment spans residues 120–140; the sequence is LYGPFWICATLVFAIAISGNL. The Lumenal segment spans residues 141–162; the sequence is SNFLIHLGEKTYHYVPEFRKVS. A helical transmembrane segment spans residues 163-183; the sequence is IAATIIYAYAWLVPLALWGFL. At 184-200 the chain is on the cytoplasmic side; the sequence is MWRNSKVMNIVSYSFLE. Residues 201–221 traverse the membrane as a helical segment; sequence IVCVYGYSLFIYIPTAILWII. Topologically, residues 222–227 are lumenal; the sequence is PQKAVR. The chain crosses the membrane as a helical span at residues 228–248; that stretch reads WILVMIALGISGSLLAMTFWP. Over 249–256 the chain is Cytoplasmic; the sequence is AVREDNRR. The helical transmembrane segment at 257-277 threads the bilayer; that stretch reads VALATIVTIVLLHMLLSVGCL. The Lumenal segment spans residues 278-306; sequence AYFFDAPEMDHLPTTTATPNQTVAAAKSS. An N-linked (GlcNAc...) asparagine glycan is attached at Asn297.

Belongs to the YIP1 family. In terms of assembly, interacts with YIPF6; this interaction may stabilize YIPF1. May also form a ternary complex with YIPF2 and YIPF6.

It is found in the golgi apparatus. The protein resides in the cis-Golgi network membrane. Its subcellular location is the trans-Golgi network membrane. The protein localises to the late endosome membrane. In Homo sapiens (Human), this protein is Protein YIPF1 (YIPF1).